A 502-amino-acid chain; its full sequence is MADKADKMKARLPRGFVDRVPDDLRAAEKMMATIREVYDLYGFEPVETPLVEYTDALGKFLPDQDRPNEGVFSFQDDDEQWLSLRYDLTAPLARYVAENFETLPKPYRSYRNGWVFRNEKPGPGRFRQFMQFDADTVGAPNVSADAEMCMMMADTLERLGIQRGDYAIRVNNRKVLDGVLDAIGLEGEGNAAKRLNVLRAIDKLDKFGPEGVRLLLGKGRLDESGDFTKGAQLPEAAIEKVLAFTAAGGADGAQTIANLQAVVAGNAEGEEGVQELADMQALFFAGGYEGRVKIDPSVVRGLEYYTGPVFEAELLFDVTNEDGQKVVFGSVGGGGRYDGLVSRFRGEPVPATGFSIGVSRLMTALKNLGKLDVSDTVGPVVVLVMDKDTQNLGRYQKMVSDLRKAGIRAEMYVGGSGMKAQMKYADRRAAPCVVIQGSQEREAGEVQIKDLVEGKRLSAEIEDNVTWRESRPAQITVREDGLVDAVREILDAQARDRAEQSK.

Belongs to the class-II aminoacyl-tRNA synthetase family. In terms of assembly, homodimer.

Its subcellular location is the cytoplasm. It carries out the reaction tRNA(His) + L-histidine + ATP = L-histidyl-tRNA(His) + AMP + diphosphate + H(+). The chain is Histidine--tRNA ligase (hisS) from Brucella suis biovar 1 (strain 1330).